The primary structure comprises 335 residues: Glucan endo-1,3-beta-glucosidase, acidic isoform (335 aa).

Residues 1–29 form the signal peptide; sequence MARQGVIASMHALALLLGAFAAIPTGVQS. E122 (proton donor) is an active-site residue. E259 (nucleophile) is an active-site residue.

Belongs to the glycosyl hydrolase 17 family. Accumulates in aleurone layers. Much lower levels are found in the embryo, and none in starchy endosperm.

It is found in the secreted. It localises to the extracellular space. The catalysed reaction is Hydrolysis of (1-&gt;3)-beta-D-glucosidic linkages in (1-&gt;3)-beta-D-glucans.. Its function is as follows. Is thought to be an important plant defense-related product against fungal pathogens. This is Glucan endo-1,3-beta-glucosidase, acidic isoform from Zea mays (Maize).